The sequence spans 367 residues: Leucine-rich repeat-containing protein 28 (367 aa).

9 LRR repeats span residues 16–36, 42–63, 66–87, 89–111, 112–133, 135–156, 158–179, 181–202, and 204–226; these read KHKN…ELLK, YLER…LAQK, NLVE…IGSL, KLQS…GRLK, SLRH…IGKL, ELQT…LYQC, SLQY…LCQL, SLNE…LGRS, and ELQY…LYNK.

In Xenopus tropicalis (Western clawed frog), this protein is Leucine-rich repeat-containing protein 28 (lrrc28).